The following is a 232-amino-acid chain: 7-cyano-7-deazaguanine synthase (232 aa).

8-18 (LSGGLDSATVL) is an ATP binding site. Zn(2+) is bound by residues Cys188, Cys198, Cys201, and Cys204.

The protein belongs to the QueC family. It depends on Zn(2+) as a cofactor.

It catalyses the reaction 7-carboxy-7-deazaguanine + NH4(+) + ATP = 7-cyano-7-deazaguanine + ADP + phosphate + H2O + H(+). It participates in purine metabolism; 7-cyano-7-deazaguanine biosynthesis. Catalyzes the ATP-dependent conversion of 7-carboxy-7-deazaguanine (CDG) to 7-cyano-7-deazaguanine (preQ(0)). In Nitrosospira multiformis (strain ATCC 25196 / NCIMB 11849 / C 71), this protein is 7-cyano-7-deazaguanine synthase.